The following is a 345-amino-acid chain: Ryncolin-4 (345 aa).

The N-terminal stretch at 1 to 19 (MKPWAAFHLIFLVASSLEG) is a signal peptide. The segment at 48–118 (ILQSQPGIPG…DKGDKGEDCN (71 aa)) is disordered. Residues 57 to 114 (GIPGVPGTNGSEGLKGDPGPQGPPGIRGPDGIRGEAGPKGDKGDQGDKGDKGDKGDKG) enclose the Collagen-like domain. Residues 86–116 (DGIRGEAGPKGDKGDQGDKGDKGDKGDKGED) show a composition bias toward basic and acidic residues. One can recognise a Fibrinogen C-terminal domain in the interval 121–339 (DCLPTEVRNC…YADMKIRPQK (219 aa)). Cystine bridges form between Cys130–Cys158 and Cys282–Cys295.

Belongs to the ficolin lectin family. Veficolin subfamily. In terms of processing, hydroxylated, possibly at Pro-80. Expressed by the venom duct.

The protein localises to the secreted. In terms of biological role, initiates complement activation and/or interferes in platelet aggregation and/or blood coagulation. The protein is Ryncolin-4 of Cerberus rynchops (Dog-faced water snake).